The sequence spans 835 residues: Neuroligin-2 (835 aa).

The first 14 residues, 1–14 (MWLLALCLVGLAGA), serve as a signal peptide directing secretion. At 15 to 677 (QRGGGGPGGG…DSRDYSTELS (663 aa)) the chain is on the extracellular side. Residues asparagine 98 and asparagine 136 are each glycosylated (N-linked (GlcNAc...) asparagine). Disulfide bonds link cysteine 106–cysteine 141, cysteine 317–cysteine 328, and cysteine 487–cysteine 521. A glycan (N-linked (GlcNAc...) asparagine) is linked at asparagine 522. The interval 623–668 (PPYATRWPPRPPAGAPGTRRPPPPATLPPEPEPEPGPRAYDRFPGD) is disordered. The span at 630-658 (PPRPPAGAPGTRRPPPPATLPPEPEPEPG) shows a compositional bias: pro residues. Residues 678-698 (VTVAVGASLLFLNILAFAALY) traverse the membrane as a helical segment. The interval 678-698 (VTVAVGASLLFLNILAFAALY) is required for interaction with LHFPL4. At 699 to 835 (YKRDRRQELR…LPHPHSTTRV (137 aa)) the chain is on the cytoplasmic side. Residues serine 713 and serine 718 each carry the phosphoserine modification. Positions 790–835 (LLPSGLGPPPPPPPPSLHPFGPFPPPPPTATSHNNTLPHPHSTTRV) are disordered. Over residues 795–818 (LGPPPPPPPPSLHPFGPFPPPPPT) the composition is skewed to pro residues. Residues 823–835 (NNTLPHPHSTTRV) show a composition bias toward polar residues.

It belongs to the type-B carboxylesterase/lipase family. Interacts with neurexins NRXN1, NRXN2 and NRXN3. Interaction with neurexins is mediated by heparan sulfate glycan modification on neurexin. Interacts (via its C-terminus) with DLG4/PSD-95 (via PDZ domain 3). Interacts with PATJ. Interacts with GPHN. Interacts with MDGA1 and MDGA2. Found in a complex with MAGI2 and IGSF9B, where it interacts with MAGI2 (via WW 1, WW 2 and PDZ 2 domains). Identified in a complex of 720 kDa composed of LHFPL4, NLGN2, GABRA1, GABRB2, GABRG2 and GABRB3. Interacts with LHFPL4; leading to mutual regulation of the protein level and synaptic clustering. Interacts with NLGN2. In terms of tissue distribution, expressed in the blood vessel walls. Detected in colon, brain and pancreas islets of Langerhans (at protein level). Detected in brain, and at lower levels in pancreas islet beta cells.

The protein resides in the cell membrane. It is found in the postsynaptic cell membrane. It localises to the presynaptic cell membrane. Transmembrane scaffolding protein involved in cell-cell interactions via its interactions with neurexin family members. Mediates cell-cell interactions both in neurons and in other types of cells, such as Langerhans beta cells. Plays a role in synapse function and synaptic signal transmission, especially via gamma-aminobutyric acid receptors (GABA(A) receptors). Functions by recruiting and clustering synaptic proteins. Promotes clustering of postsynaptic GABRG2 and GPHN. Promotes clustering of postsynaptic LHFPL4. Modulates signaling by inhibitory synapses, and thereby plays a role in controlling the ratio of signaling by excitatory and inhibitory synapses and information processing. Required for normal signal amplitude from inhibitory synapses, but is not essential for normal signal frequency. May promote the initial formation of synapses, but is not essential for this. In vitro, triggers the de novo formation of presynaptic structures. Mediates cell-cell interactions between Langerhans beta cells and modulates insulin secretion. This chain is Neuroligin-2 (NLGN2), found in Homo sapiens (Human).